We begin with the raw amino-acid sequence, 256 residues long: VLCVQGSCPLLVVEQIGQRPLWAQSLELPGPAMQPLPTGAFPEEVTEETPVQSENEPKVLDPEGDLLCIAKTFSYLRESGWYWGSITASEARQHLQKMPEGTFLVRDSTHPSYLFTLSVKTTRGPTNVRIEYADSSFRLDSNCLSRPRILAFPDVVSLVQHYVASCTADTRSDSPDPAPTPALPVSKPDAPGDPVLPIPVATAVHLKLVQPFVRRSSARSLQHLCRLVINRLVTDVDCLPLPRRMADYLRQYPFQL.

The SH2 domain occupies 81–162 (WYWGSITASE…PDVVSLVQHY (82 aa)). The disordered stretch occupies residues 168–190 (ADTRSDSPDPAPTPALPVSKPDA). An SOCS box domain is found at 207–255 (KLVQPFVRRSSARSLQHLCRLVINRLVTDVDCLPLPRRMADYLRQYPFQ).

As to quaternary structure, stably associated with the tyrosine-phosphorylated IL3 receptor beta chain and tyrosine-phosphorylated EPO receptor (EPOR).

Its pathway is protein modification; protein ubiquitination. SOCS family proteins form part of a classical negative feedback system that regulates cytokine signal transduction. CIS is involved in the negative regulation of cytokines that signal through the JAK-STAT5 pathway such as erythropoietin, prolactin and interleukin 3 (IL3) receptor. Inhibits STAT5 trans-activation by suppressing its tyrosine phosphorylation. May be a substrate recognition component of a SCF-like ECS (Elongin BC-CUL2/5-SOCS-box protein) E3 ubiquitin-protein ligase complex which mediates the ubiquitination and subsequent proteasomal degradation of target proteins. The polypeptide is Cytokine-inducible SH2-containing protein (Cish) (Rattus norvegicus (Rat)).